Reading from the N-terminus, the 199-residue chain is Recombination protein RecR (199 aa).

A C4-type zinc finger spans residues 57–72; the sequence is CQSCRTYTEESLCPIC. Residues 81–176 enclose the Toprim domain; that stretch reads STICVVETPA…VISRIAHGVP (96 aa).

This sequence belongs to the RecR family.

Functionally, may play a role in DNA repair. It seems to be involved in an RecBC-independent recombinational process of DNA repair. It may act with RecF and RecO. The protein is Recombination protein RecR of Shewanella sp. (strain ANA-3).